Here is a 409-residue protein sequence, read N- to C-terminus: NADH-quinone oxidoreductase subunit D (409 aa).

It belongs to the complex I 49 kDa subunit family. In terms of assembly, NDH-1 is composed of 14 different subunits. Subunits NuoB, C, D, E, F, and G constitute the peripheral sector of the complex.

The protein resides in the cell inner membrane. The catalysed reaction is a quinone + NADH + 5 H(+)(in) = a quinol + NAD(+) + 4 H(+)(out). Its function is as follows. NDH-1 shuttles electrons from NADH, via FMN and iron-sulfur (Fe-S) centers, to quinones in the respiratory chain. The immediate electron acceptor for the enzyme in this species is believed to be ubiquinone. Couples the redox reaction to proton translocation (for every two electrons transferred, four hydrogen ions are translocated across the cytoplasmic membrane), and thus conserves the redox energy in a proton gradient. The polypeptide is NADH-quinone oxidoreductase subunit D (Helicobacter pylori (strain G27)).